The primary structure comprises 278 residues: MQPALAPAPHPSMQTSAQDHADQVLHDSLLAAQHLSQHPQQPRPQQPNAQPHHLQPTATTSPRDQNNIDPAISGGAMLPPSQPPAQPEPTVEDETPKTYGKRPLSTSKRAAQNRAAQRAFRQRKESYIRKLEEQVKEYEVMSQEYKALQAENYQLREYVINLQSRLLDSQGEVPELPGNIDLNQPRTEISVPQPAPRPGQAGASAPPQGSPQSQVSIANDDMNSLNRIAEAGLGMRKHPNEEAFLSNNFQARRGRGDETADPSETKTEPPTHGLPMVS.

A compositionally biased stretch (pro residues) spans 1-10; sequence MQPALAPAPH. Residues 1-121 form a disordered region; sequence MQPALAPAPH…QNRAAQRAFR (121 aa). Residues 56 to 68 are compositionally biased toward polar residues; it reads PTATTSPRDQNNI. Residues 103 to 166 enclose the bZIP domain; the sequence is PLSTSKRAAQ…EYVINLQSRL (64 aa). A basic motif region spans residues 104–127; that stretch reads LSTSKRAAQNRAAQRAFRQRKESY. A compositionally biased stretch (low complexity) spans 109 to 119; that stretch reads RAAQNRAAQRA. The tract at residues 131-162 is leucine-zipper; the sequence is LEEQVKEYEVMSQEYKALQAENYQLREYVINL. The tract at residues 173–278 is disordered; the sequence is VPELPGNIDL…PPTHGLPMVS (106 aa). The span at 198–214 shows a compositional bias: low complexity; sequence PGQAGASAPPQGSPQSQ. Residues 215–226 are compositionally biased toward polar residues; that stretch reads VSIANDDMNSLN. Residues 254 to 269 show a composition bias toward basic and acidic residues; sequence GRGDETADPSETKTEP.

This sequence belongs to the bZIP family.

It localises to the nucleus. Functionally, putative transcription factor. The chain is Putative transcription factor kapC (kapC) from Emericella nidulans (strain FGSC A4 / ATCC 38163 / CBS 112.46 / NRRL 194 / M139) (Aspergillus nidulans).